A 367-amino-acid polypeptide reads, in one-letter code: Aspartate-semialdehyde dehydrogenase (367 aa).

NADP(+) contacts are provided by residues 10–13 (RGMV), 37–38 (TS), and Q73. A phosphate-binding site is contributed by R102. The Acyl-thioester intermediate role is filled by C135. C135 is subject to S-cysteinyl cysteine; in inhibited form. Q162 serves as a coordination point for substrate. Residues 165 to 166 (SG) and P193 contribute to the NADP(+) site. Residue E241 participates in substrate binding. Phosphate is bound at residue K244. Position 267 (R267) interacts with substrate. H274 functions as the Proton acceptor in the catalytic mechanism. Residue Q350 participates in NADP(+) binding.

The protein belongs to the aspartate-semialdehyde dehydrogenase family. Homodimer.

It catalyses the reaction L-aspartate 4-semialdehyde + phosphate + NADP(+) = 4-phospho-L-aspartate + NADPH + H(+). It functions in the pathway amino-acid biosynthesis; L-lysine biosynthesis via DAP pathway; (S)-tetrahydrodipicolinate from L-aspartate: step 2/4. Its pathway is amino-acid biosynthesis; L-methionine biosynthesis via de novo pathway; L-homoserine from L-aspartate: step 2/3. It participates in amino-acid biosynthesis; L-threonine biosynthesis; L-threonine from L-aspartate: step 2/5. In terms of biological role, catalyzes the NADPH-dependent formation of L-aspartate-semialdehyde (L-ASA) by the reductive dephosphorylation of L-aspartyl-4-phosphate. The sequence is that of Aspartate-semialdehyde dehydrogenase from Escherichia coli O6:H1 (strain CFT073 / ATCC 700928 / UPEC).